The following is a 1009-amino-acid chain: Cilia- and flagella-associated protein 70 (1009 aa).

A compositionally biased stretch (basic and acidic residues) spans 410–428 (NLKEDKPVKEKDIDGRPRP). Residues 410 to 457 (NLKEDKPVKEKDIDGRPRPGDVQAPSIKSQSSDTPLEGEPPLSHNPEG) form a disordered region. TPR repeat units follow at residues 498 to 531 (PPLT…EYYR), 635 to 668 (SEQL…EPQN), 669 to 702 (LDHW…NQSH), 704 to 736 (HSLL…EPTN), 888 to 921 (HFIF…SPSC), 923 to 954 (TWLG…NNYN), and 956 to 988 (EVWA…KLKD).

Belongs to the CFAP70 family.

Its subcellular location is the cell projection. The protein localises to the cilium. It is found in the flagellum. It localises to the cytoplasm. The protein resides in the cytoskeleton. Its subcellular location is the flagellum basal body. The protein localises to the cilium axoneme. Functionally, axoneme-binding protein that plays a role in the regulation of ciliary motility and cilium length. The polypeptide is Cilia- and flagella-associated protein 70 (Macaca fascicularis (Crab-eating macaque)).